The chain runs to 562 residues: Phosphatidylinositol 4-phosphate 5-kinase type-1 alpha (562 aa).

A PIPK domain is found at T81–V449. Residue K103 forms a Glycyl lysine isopeptide (Lys-Gly) (interchain with G-Cter in ubiquitin) linkage. S486 carries the post-translational modification Phosphoserine. The interval H506 to S526 is disordered.

In terms of assembly, interacts with RAC1. Interacts with TUT1. Forms a complex with CDH1/E-cadherin, CTNNB1/beta-catenin and CTNND1 at the plasma membrane upon calcium stimulation. Found in a ternary complex with IRS1 and DGKZ in the absence of insulin stimulation. Interacts with DGKZ. Interacts with PIP4K2C; the interaction inhibits PIP5K1A kinase activity. Highly expressed in heart, placenta, skeletal muscle, kidney and pancreas. Detected at lower levels in brain, lung and liver.

The protein localises to the cell membrane. The protein resides in the cytoplasm. Its subcellular location is the nucleus. It localises to the nucleus speckle. It is found in the cell projection. The protein localises to the ruffle. The protein resides in the lamellipodium. It carries out the reaction a 1,2-diacyl-sn-glycero-3-phospho-(1D-myo-inositol 4-phosphate) + ATP = a 1,2-diacyl-sn-glycero-3-phospho-(1D-myo-inositol-4,5-bisphosphate) + ADP + H(+). The catalysed reaction is 1-octadecanoyl-2-(5Z,8Z,11Z,14Z)-eicosatetraenoyl-sn-glycero-3-phospho-1D-myo-inositol 4-phosphate + ATP = 1-octadecanoyl-2-(5Z,8Z,11Z,14Z)-eicosatetraenoyl-sn-glycero-3-phospho-1D-myo-inositol 4,5-bisphosphate + ADP + H(+). It catalyses the reaction 1,2-dihexadecanoyl-sn-glycero-3-phospho-(1D-myo-inositol-4-phosphate) + ATP = 1,2-dihexadecanoyl-sn-glycero-3-phospho-(1D-myo-inositol-4,5-bisphosphate) + ADP + H(+). The enzyme catalyses 1-octadecanoyl-2-(9Z)-octadecenoyl-sn-glycero-3-phospho-1D-myo-inositol 4-phosphate + ATP = 1-octadecanoyl-2-(9Z)-octadecenoyl-sn-glycero-3-phospho-1D-myo-inositol 4,5-bisphosphate + ADP + H(+). It carries out the reaction 1-octadecanoyl-2-(9Z)-octadecenoyl-sn-glycero-3-phospho-1D-myo-inositol + ATP = 1-octadecanoyl-2-(9Z)-octadecenoyl-sn-glycero-3-phospho-1D-myo-inositol 5-phosphate + ADP + H(+). The catalysed reaction is 1-octadecanoyl-2-(9Z,12Z)-octadecadienoyl-sn-glycero-3-phospho-1D-myo-inositol + ATP = 1-octadecanoyl-2-(9Z,12Z)-octadecadienoyl-sn-glycero-3-phospho-1D-myo-inositol 5-phosphate + ADP + H(+). It catalyses the reaction 1-octadecanoyl-2-(5Z,8Z,11Z,14Z-eicosatetraenoyl)-sn-glycero-3-phospho-(1D-myo-inositol) + ATP = 1-octadecanoyl-2-(5Z,8Z,11Z,14Z)-eicosatetraenoyl-sn-glycero-3-phospho-1D-myo-inositol 5-phosphate + ADP + H(+). The enzyme catalyses 1,2-di-(9Z,12Z)-octadecadienoyl-sn-glycero-3-phospho-1D-myo-inositol + ATP = 1,2-di(9Z,12Z)-octadecadienoyl-sn-glycero-3-phospho-1D-myo-inositol 5-phosphate + ADP + H(+). Its activity is regulated as follows. Activated by diarachidonoyl phosphatidic acid (DAPA), when 1,2-dipalmitoyl-PI4P is used as a substrate. Catalyzes the phosphorylation of phosphatidylinositol 4-phosphate (PtdIns(4)P/PI4P) to form phosphatidylinositol 4,5-bisphosphate (PtdIns(4,5)P2/PIP2), a lipid second messenger that regulates several cellular processes such as signal transduction, vesicle trafficking, actin cytoskeleton dynamics, cell adhesion, and cell motility. PtdIns(4,5)P2 can directly act as a second messenger or can be utilized as a precursor to generate other second messengers: inositol 1,4,5-trisphosphate (IP3), diacylglycerol (DAG) or phosphatidylinositol-3,4,5-trisphosphate (PtdIns(3,4,5)P3/PIP3). PIP5K1A-mediated phosphorylation of PtdIns(4)P is the predominant pathway for PtdIns(4,5)P2 synthesis. Can also use phosphatidylinositol (PtdIns) as substrate in vitro. Together with PIP5K1C, is required for phagocytosis, both enzymes regulating different types of actin remodeling at sequential steps. Promotes particle ingestion by activating the WAS GTPase-binding protein that induces Arp2/3 dependent actin polymerization at the nascent phagocytic cup. Together with PIP5K1B, is required, after stimulation by G-protein coupled receptors, for the synthesis of IP3 that will induce stable platelet adhesion. Recruited to the plasma membrane by the E-cadherin/beta-catenin complex where it provides the substrate PtdIns(4,5)P2 for the production of PtdIns(3,4,5)P3, IP3 and DAG, that will mobilize internal calcium and drive keratinocyte differentiation. Positively regulates insulin-induced translocation of SLC2A4 to the cell membrane in adipocytes. Together with PIP5K1C has a role during embryogenesis. Independently of its catalytic activity, is required for membrane ruffling formation, actin organization and focal adhesion formation during directional cell migration by controlling integrin-induced translocation of the small GTPase RAC1 to the plasma membrane. Also functions in the nucleus where it acts as an activator of TUT1 adenylyltransferase activity in nuclear speckles, thereby regulating mRNA polyadenylation of a select set of mRNAs. The chain is Phosphatidylinositol 4-phosphate 5-kinase type-1 alpha from Homo sapiens (Human).